A 1703-amino-acid chain; its full sequence is Arf-GAP with Rho-GAP domain, ANK repeat and PH domain-containing protein 2 (1703 aa).

The region spanning 6-70 (EVNADIRDFL…LKQLQMIFSK (65 aa)) is the SAM domain. The residue at position 77 (Tyr-77) is a Phosphotyrosine. Disordered regions lie at residues 84 to 132 (KNGS…LSEG), 191 to 232 (EEHT…NGTN), and 286 to 319 (PVPE…LTLK). Polar residues-rich tracts occupy residues 85–103 (NGST…STHT), 123–132 (MVTTSTLSEG), and 197–214 (GNLT…NTEC). Residues 222-232 (TSGTHSGNGTN) show a composition bias toward low complexity. Residues 308 to 319 (NTTSAGKSLTLK) are compositionally biased toward polar residues. 2 PH domains span residues 480-572 (AKEK…SALK) and 585-677 (APEK…QSIA). In terms of domain architecture, Arf-GAP spans 674 to 809 (QSIAETLSDY…TLLASLTKEE (136 aa)). The C4-type zinc-finger motif lies at 698-721 (CADCKAPDPDWASINLCVVICKKC). PH domains follow at residues 899–1001 (QTAA…KRFV) and 1012–1110 (DYDL…KAAG). Residues 1114–1295 (NALQDQQLCK…DLINNYVEIF (182 aa)) form the Rho-GAP domain. The Ras-associating domain occupies 1324–1418 (GDLLIEVFVE…AYLVVKRFLT (95 aa)). In terms of domain architecture, PH 5 spans 1428–1531 (KSIKEGILKL…WMASIFIAQH (104 aa)). The residue at position 1627 (Ser-1627) is a Phosphoserine. 2 disordered regions span residues 1633-1670 (DTEA…DPKL) and 1684-1703 (RSRP…KEVK). Composition is skewed to basic and acidic residues over residues 1653 to 1670 (KKTE…DPKL) and 1688 to 1703 (LHKE…KEVK).

The protein localises to the cytoplasm. Functionally, phosphatidylinositol 3,4,5-trisphosphate-dependent GTPase-activating protein that modulates actin cytoskeleton remodeling by regulating ARF and RHO family members. Is activated by phosphatidylinositol 3,4,5-trisphosphate (PtdIns(3,4,5)P3) binding. Can be activated by phosphatidylinositol 3,4-bisphosphate (PtdIns(3,4,5)P2) binding, albeit with lower efficiency. The sequence is that of Arf-GAP with Rho-GAP domain, ANK repeat and PH domain-containing protein 2 (Arap2) from Mus musculus (Mouse).